The primary structure comprises 560 residues: Solute carrier family 49 member A3 (560 aa).

12 helical membrane-spanning segments follow: residues 30-50, 70-90, 100-120, 125-145, 166-186, 192-212, 250-270, 282-302, 318-338, 341-361, 379-399, and 422-442; these read WVFL…WLSF, WLSL…IWIL, ILGA…CMVV, PFAF…LVIF, LATM…PVLV, IPLM…LSTI, VILA…SALL, GFSG…ALAL, IGLC…QLQG, LALA…GPVA, GMIF…MTAL, and VSLL…AVFF. The interval 451 to 540 is disordered; that stretch reads AESGEPPSTR…PGRLAGRVQA (90 aa). A compositionally biased stretch (gly residues) spans 466–481; the sequence is ADSGPGVDRGGAGRAG.

It belongs to the major facilitator superfamily.

Its subcellular location is the membrane. This is Solute carrier family 49 member A3 from Homo sapiens (Human).